A 546-amino-acid chain; its full sequence is Glutamate--tRNA ligase (546 aa).

The 'HIGH' region motif lies at 42–52 (PSPTGFIHLGN). A 'KMSKS' region motif is present at residues 293 to 297 (KLSKR). Residue K296 coordinates ATP.

The protein belongs to the class-I aminoacyl-tRNA synthetase family. Glutamate--tRNA ligase type 1 subfamily. Monomer.

It is found in the cytoplasm. The catalysed reaction is tRNA(Glu) + L-glutamate + ATP = L-glutamyl-tRNA(Glu) + AMP + diphosphate. Catalyzes the attachment of glutamate to tRNA(Glu) in a two-step reaction: glutamate is first activated by ATP to form Glu-AMP and then transferred to the acceptor end of tRNA(Glu). This chain is Glutamate--tRNA ligase, found in Acetivibrio thermocellus (strain ATCC 27405 / DSM 1237 / JCM 9322 / NBRC 103400 / NCIMB 10682 / NRRL B-4536 / VPI 7372) (Clostridium thermocellum).